A 434-amino-acid polypeptide reads, in one-letter code: Ribonuclease T2-like (434 aa).

An N-terminal signal peptide occupies residues 1–18 (MLLKNLHSLLQLPIFSNG). 5 disulfides stabilise this stretch: Cys27-Cys46, Cys35-Cys94, Cys45-Cys171, Cys102-Cys163, and Cys241-Cys277. N-linked (GlcNAc...) asparagine glycosylation is found at Asn37 and Asn70. His87 is an active-site residue. N-linked (GlcNAc...) asparagine glycans are attached at residues Asn103 and Asn123. Residues Glu156 and His160 contribute to the active site.

It belongs to the RNase T2 family. In terms of processing, N-glycosylated.

Its subcellular location is the vacuole lumen. The protein localises to the cytoplasm. It carries out the reaction a ribonucleotidyl-ribonucleotide-RNA + H2O = a 3'-end 3'-phospho-ribonucleotide-RNA + a 5'-end dephospho-ribonucleoside-RNA + H(+). In terms of biological role, rnase which modulates cell survival under stress conditions. Released from the vacuole to the cytoplasm during stress to promote tRNA and rRNA cleavage and to activate separately a downstream pathway that promotes cell death. Involved in cell size, vacuolar morphology and growth at high temperatures and high salt concentration. The protein is Ribonuclease T2-like (RNY1) of Saccharomyces cerevisiae (strain ATCC 204508 / S288c) (Baker's yeast).